The sequence spans 356 residues: Alanine racemase, catabolic (356 aa).

Lys-35 acts as the Proton acceptor; specific for D-alanine in catalysis. Lys-35 is subject to N6-(pyridoxal phosphate)lysine. Arg-130 is a substrate binding site. Residue Tyr-253 is the Proton acceptor; specific for L-alanine of the active site. Met-301 lines the substrate pocket.

Belongs to the alanine racemase family. Requires pyridoxal 5'-phosphate as cofactor.

The enzyme catalyses L-alanine = D-alanine. In terms of biological role, isomerizes L-alanine to D-alanine which is then oxidized to pyruvate by DadA. The sequence is that of Alanine racemase, catabolic (dadX) from Escherichia coli O157:H7.